Reading from the N-terminus, the 113-residue chain is Replication initiation control protein YabA (113 aa).

4 residues coordinate Zn(2+): His-88, Cys-90, Cys-104, and Cys-107.

Belongs to the YabA family. As to quaternary structure, homotetramer. Interacts with both DnaA and DnaN, acting as a bridge between these two proteins. Zn(2+) is required as a cofactor.

The protein localises to the cytoplasm. It localises to the nucleoid. Involved in control of chromosome replication initiation. Inhibits the cooperative binding of DnaA to the oriC region, thus negatively regulating initiation of chromosome replication. Inhibits the ability of DnaA-ATP to form a helix on DNA; does not disassemble preformed DnaA-DNA helices. Decreases the residence time of DnaA on the chromosome at its binding sites (oriC, replication forks and promoter-binding sites). Tethers DnaA to the replication machinery via the DNA polymerase beta sliding clamp subunit (dnaN). Associates with oriC and other DnaA targets on the chromosome in a DnaA-dependent manner. The sequence is that of Replication initiation control protein YabA from Staphylococcus saprophyticus subsp. saprophyticus (strain ATCC 15305 / DSM 20229 / NCIMB 8711 / NCTC 7292 / S-41).